The chain runs to 223 residues: Thymidine kinase (223 aa).

ATP contacts are provided by residues 19–26 and 96–99; these read GPMFAGKT and DEVQ. The Proton acceptor role is filled by Glu-97. Zn(2+) is bound by residues Cys-153, Cys-156, Cys-191, and His-194.

Belongs to the thymidine kinase family. In terms of assembly, homotetramer.

Its subcellular location is the cytoplasm. It carries out the reaction thymidine + ATP = dTMP + ADP + H(+). This is Thymidine kinase from Ureaplasma urealyticum serovar 10 (strain ATCC 33699 / Western).